We begin with the raw amino-acid sequence, 285 residues long: NADPH-dependent 7-cyano-7-deazaguanine reductase (285 aa).

91 to 93 (IES) contacts substrate. Residue 93–94 (SK) coordinates NADPH. The active-site Thioimide intermediate is the cysteine 191. The Proton donor role is filled by aspartate 198. Residue 230 to 231 (HE) coordinates substrate. Residue 259–260 (RG) coordinates NADPH.

The protein belongs to the GTP cyclohydrolase I family. QueF type 2 subfamily. In terms of assembly, homodimer.

The protein resides in the cytoplasm. The enzyme catalyses 7-aminomethyl-7-carbaguanine + 2 NADP(+) = 7-cyano-7-deazaguanine + 2 NADPH + 3 H(+). It functions in the pathway tRNA modification; tRNA-queuosine biosynthesis. Catalyzes the NADPH-dependent reduction of 7-cyano-7-deazaguanine (preQ0) to 7-aminomethyl-7-deazaguanine (preQ1). This is NADPH-dependent 7-cyano-7-deazaguanine reductase from Legionella pneumophila (strain Corby).